Reading from the N-terminus, the 525-residue chain is Glutamate--cysteine ligase (525 aa).

The protein belongs to the glutamate--cysteine ligase type 1 family. Type 1 subfamily.

It carries out the reaction L-cysteine + L-glutamate + ATP = gamma-L-glutamyl-L-cysteine + ADP + phosphate + H(+). Its pathway is sulfur metabolism; glutathione biosynthesis; glutathione from L-cysteine and L-glutamate: step 1/2. This chain is Glutamate--cysteine ligase, found in Hahella chejuensis (strain KCTC 2396).